Here is a 367-residue protein sequence, read N- to C-terminus: Anthranilate phosphoribosyltransferase (367 aa).

Residues 1 to 21 show a composition bias toward low complexity; sequence MALSSESSAASAARRPSGGPA. Positions 1-24 are disordered; it reads MALSSESSAASAARRPSGGPATSW. 5-phospho-alpha-D-ribose 1-diphosphate-binding positions include G104, 107 to 108, T112, 114 to 117, 132 to 140, and G144; these read GD, NLST, and KHGNRAASS. G104 serves as a coordination point for anthranilate. Residue S116 coordinates Mg(2+). N135 lines the anthranilate pocket. R190 lines the anthranilate pocket. Residues D248 and E249 each coordinate Mg(2+).

The protein belongs to the anthranilate phosphoribosyltransferase family. As to quaternary structure, homodimer. It depends on Mg(2+) as a cofactor.

The catalysed reaction is N-(5-phospho-beta-D-ribosyl)anthranilate + diphosphate = 5-phospho-alpha-D-ribose 1-diphosphate + anthranilate. It functions in the pathway amino-acid biosynthesis; L-tryptophan biosynthesis; L-tryptophan from chorismate: step 2/5. In terms of biological role, catalyzes the transfer of the phosphoribosyl group of 5-phosphorylribose-1-pyrophosphate (PRPP) to anthranilate to yield N-(5'-phosphoribosyl)-anthranilate (PRA). The sequence is that of Anthranilate phosphoribosyltransferase from Mycolicibacterium paratuberculosis (strain ATCC BAA-968 / K-10) (Mycobacterium paratuberculosis).